We begin with the raw amino-acid sequence, 718 residues long: Catalase-peroxidase (718 aa).

The tract at residues 1–24 (MDQKSDNAGKCPVAHTVPKGRSNR) is disordered. Residues 95-217 (WHSAGTYRIT…LAAVQMGLIY (123 aa)) constitute a cross-link (tryptophyl-tyrosyl-methioninium (Trp-Tyr) (with M-243)). H96 (proton acceptor) is an active-site residue. The segment at residues 217 to 243 (YVNPEGPNGNPDPVAAAREIRETFARM) is a cross-link (tryptophyl-tyrosyl-methioninium (Tyr-Met) (with W-95)). H258 lines the heme b pocket.

Belongs to the peroxidase family. Peroxidase/catalase subfamily. In terms of assembly, homodimer or homotetramer. Heme b is required as a cofactor. Formation of the three residue Trp-Tyr-Met cross-link is important for the catalase, but not the peroxidase activity of the enzyme.

It carries out the reaction H2O2 + AH2 = A + 2 H2O. It catalyses the reaction 2 H2O2 = O2 + 2 H2O. Bifunctional enzyme with both catalase and broad-spectrum peroxidase activity. In Sinorhizobium fredii (strain NBRC 101917 / NGR234), this protein is Catalase-peroxidase.